Here is a 60-residue protein sequence, read N- to C-terminus: MKSVCGVLIILVVLTTMLSISTFSTVGAEADCPISEAIKCVEKCNQKVEVCEPGVCKCSG.

A signal peptide spans 1 to 28; that stretch reads MKSVCGVLIILVVLTTMLSISTFSTVGA. Cystine bridges form between C32-C51, C40-C56, and C44-C58.

This sequence belongs to the short scorpion toxin superfamily. Potassium channel inhibitor family. Alpha-KTx 29 subfamily. As to expression, expressed by the venom gland.

It localises to the secreted. Weakly inhibits the Kv1.3/KCNA3 channel (1 uM of thetoxin inhibits currents by 13.2%) and Kv7.1/KCNQ1 channel (10 uM of the toxin inhibits currents by 27.7%). This Lychas mucronatus (Chinese swimming scorpion) protein is Potassium channel toxin alpha-KTx 29.3.